Reading from the N-terminus, the 93-residue chain is uncharacterized protein (93 aa).

Positions 1–22 (MNKYWLSGIIFLAYGLASPAFS) are cleaved as a signal peptide.

This is an uncharacterized protein from Escherichia coli (strain K12).